The chain runs to 205 residues: Transcriptional regulatory protein PdtaR (205 aa).

The Response regulatory domain occupies 15 to 129; the sequence is RVLIAEDEAL…DLIPAIELAV (115 aa). Asp-65 carries the 4-aspartylphosphate modification. One can recognise an ANTAR domain in the interval 135–196; the sequence is ITALEGEVAT…TMKRVAEVVL (62 aa).

Post-translationally, phosphorylated and activated by PdtaS.

It is found in the cytoplasm. Member of the two-component regulatory system PdtaR/PdtaS. This two-component system plays an essential role in mycobacterial adaptation to poor nutrient conditions. PdtaR probably acts at the level of transcriptional antitermination rather than transcriptional initiation. Functionally, in addition, the PdtaR/PdtaS two-component system controls copper and nitric oxide (NO) resistance downstream of the intramembrane protease Rip1. This coupled Rip1/PdtaS/PdtaR circuit controls NO resistance and acute lung infection in mice by relieving PdtaR/PdtaS-mediated repression of isonitrile chalkophore biosynthesis. Two signals are required to fully inactivate the PdtaR/PdtaS system and mediate NO resistance: a cytoplasmic inhibitory signal through the PdtaS kinase mediated by direct sensing of NO and the production of PPE1-5', an NO-induced small RNA, to sequester PdtaR. The sequence is that of Transcriptional regulatory protein PdtaR (pdtaR) from Mycobacterium tuberculosis (strain CDC 1551 / Oshkosh).